Consider the following 585-residue polypeptide: Amyloid protein-binding protein 2 (585 aa).

TPR repeat units lie at residues 50–83 (QGRL…HHCF), 120–153 (IQVG…CTLH), 206–239 (AALY…ITAG), 288–321 (SDTL…RQSV), 333–367 (HEDL…ITHI), 429–462 (AKHY…KEQL), 471–505 (ALSV…GKKL), and 514–547 (EYDY…NRLR).

In terms of assembly, component of a CRL2 E3 ubiquitin-protein ligase complex, also named ECS (Elongin BC-CUL2/5-SOCS-box protein) complex, composed of CUL2, Elongin BC (ELOB and ELOC), RBX1 and substrate-specific adapter APPBP2. Interacts with APP; APP interaction inhibits the E3 ubiquitin-protein ligase activity of the CRL2(APPBP2) complex. In terms of processing, rapidly degraded by the proteasome upon overexpression of a C-terminal fragment of APP.

It localises to the nucleus. It is found in the cytoplasm. Its subcellular location is the cytoskeleton. The protein localises to the membrane. The protein operates within protein modification; protein ubiquitination. With respect to regulation, E3 ubiquitin-protein ligase activity of the CRL2(APPBP2) complex is inhibited by APP. Its function is as follows. Substrate-recognition component of a Cul2-RING (CRL2) E3 ubiquitin-protein ligase complex of the DesCEND (destruction via C-end degrons) pathway, which recognizes a C-degron located at the extreme C terminus of target proteins, leading to their ubiquitination and degradation. The C-degron recognized by the DesCEND pathway is usually a motif of less than ten residues and can be present in full-length proteins, truncated proteins or proteolytically cleaved forms. The CRL2(APPBP2) complex specifically recognizes proteins with a -Arg-Xaa-Xaa-Gly degron at the C-terminus, leading to their ubiquitination and degradation. The CRL2(APPBP2) complex mediates ubiquitination and degradation of truncated SELENOV selenoproteins produced by failed UGA/Sec decoding, which end with a -Arg-Xaa-Xaa-Gly degron. May play a role in intracellular protein transport: may be involved in the translocation of APP along microtubules toward the cell surface. The polypeptide is Amyloid protein-binding protein 2 (Mus musculus (Mouse)).